A 266-amino-acid polypeptide reads, in one-letter code: MTNILSAIILGIIQGITEFLPISSSGHLLLFRHFINLKLSIIFDIYLHLATVLVIIIYYRKRILELFLTFIRFSLRKTVKSDLTNLKLILLILIITIVTGVVGTFISKYESMFTLSFVLINFIITGILILMLEFNFLKVDFKGNILLAGIFMGLMQGLGALPGISRSGITIFSASVIGFNRKSAFEISFLSLIPIVFGAILLKHKEFYDIFMVLNFFEINLGALVAFVVGIFSINFFFKMLNNKKLYYFSIYLFALSIIVCYFVRI.

A run of 8 helical transmembrane segments spans residues 4-24 (ILSA…PISS), 39-59 (LSII…IIYY), 86-106 (LKLI…GTFI), 112-132 (MFTL…ILML), 145-165 (ILLA…PGIS), 182-202 (KSAF…AILL), 210-230 (IFMV…FVVG), and 246-266 (LYYF…FVRI).

This sequence belongs to the UppP family.

It localises to the cell inner membrane. The catalysed reaction is di-trans,octa-cis-undecaprenyl diphosphate + H2O = di-trans,octa-cis-undecaprenyl phosphate + phosphate + H(+). Catalyzes the dephosphorylation of undecaprenyl diphosphate (UPP). Confers resistance to bacitracin. The polypeptide is Undecaprenyl-diphosphatase (Borreliella burgdorferi (strain ATCC 35210 / DSM 4680 / CIP 102532 / B31) (Borrelia burgdorferi)).